The primary structure comprises 231 residues: Enolase-phosphatase E1 (231 aa).

Residues D11 and E13 each contribute to the Mg(2+) site. Substrate contacts are provided by residues 125-126 (SS) and K162. D188 provides a ligand contact to Mg(2+).

Belongs to the HAD-like hydrolase superfamily. MasA/MtnC family. Monomer. Requires Mg(2+) as cofactor.

Its subcellular location is the cytoplasm. The protein resides in the nucleus. The enzyme catalyses 5-methylsulfanyl-2,3-dioxopentyl phosphate + H2O = 1,2-dihydroxy-5-(methylsulfanyl)pent-1-en-3-one + phosphate. It functions in the pathway amino-acid biosynthesis; L-methionine biosynthesis via salvage pathway; L-methionine from S-methyl-5-thio-alpha-D-ribose 1-phosphate: step 3/6. The protein operates within amino-acid biosynthesis; L-methionine biosynthesis via salvage pathway; L-methionine from S-methyl-5-thio-alpha-D-ribose 1-phosphate: step 4/6. Functionally, bifunctional enzyme that catalyzes the enolization of 2,3-diketo-5-methylthiopentyl-1-phosphate (DK-MTP-1-P) into the intermediate 2-hydroxy-3-keto-5-methylthiopentenyl-1-phosphate (HK-MTPenyl-1-P), which is then dephosphorylated to form the acireductone 1,2-dihydroxy-3-keto-5-methylthiopentene (DHK-MTPene). This Pyricularia oryzae (strain 70-15 / ATCC MYA-4617 / FGSC 8958) (Rice blast fungus) protein is Enolase-phosphatase E1.